A 354-amino-acid chain; its full sequence is NADH-quinone oxidoreductase subunit H (354 aa).

Helical transmembrane passes span 23-43 (LVRA…LILW), 91-111 (YIIA…VVPF), 124-144 (LLYV…AGWA), 162-182 (ISYE…TGSL), 203-223 (ILSW…ISGV), 250-270 (GMAF…ISAM), 291-311 (IPGF…FIWL), and 330-350 (IFIP…VSPW).

Belongs to the complex I subunit 1 family. In terms of assembly, NDH-1 is composed of 14 different subunits. Subunits NuoA, H, J, K, L, M, N constitute the membrane sector of the complex.

The protein localises to the cell inner membrane. The enzyme catalyses a quinone + NADH + 5 H(+)(in) = a quinol + NAD(+) + 4 H(+)(out). In terms of biological role, NDH-1 shuttles electrons from NADH, via FMN and iron-sulfur (Fe-S) centers, to quinones in the respiratory chain. The immediate electron acceptor for the enzyme in this species is believed to be ubiquinone. Couples the redox reaction to proton translocation (for every two electrons transferred, four hydrogen ions are translocated across the cytoplasmic membrane), and thus conserves the redox energy in a proton gradient. This subunit may bind ubiquinone. The chain is NADH-quinone oxidoreductase subunit H from Ralstonia nicotianae (strain ATCC BAA-1114 / GMI1000) (Ralstonia solanacearum).